The primary structure comprises 550 residues: MSDTTTAFTVPAVAKAVAAAIPDRELIIQGDRRYTYRQVIERSNRLAAYLHSQGLGCHTEREALAGHEVGQDLLGLYAYNGNEFVEALLGAFAARVAPFNVNFRYVKSELHYLLADSEATALIYHAAFAPRVAEILPELPRLRVLIQIADESGNELLDGAVDYEDALASVSAQPPPVRHCPDDLYVLYTGGTTGMPKGVLWRQHDIFMTSFGGRNLMTGEPSSSIDEIVQRAASGPGTKLMILPPLIHGAAQWSVMTAITTGQTVVFPTVVDHLDAEDVVRTIEREKVMVVTVVGDAMARPLVAAIEKGIADVSSLAVVANGGALLTPFVKQRLIEVLPNAVVVDGVGSSETGAQMHHMSTPGAVATGTFNAGPDTFVAAEDLSAILPPGHEGMGWLAQRGYVPLGYKGDAAKTAKTFPVIDGVRYAVPGDRARHHADGHIELLGRDSVCINSGGEKIFVEEVETAIASHPAVADVVVAGRPSERWGQEVVAVVALSDGAAVDAGELIAHASNSLARYKLPKAIVFRPVIERSPSGKADYRWAREQAVNG.

The N-terminal stretch at 1 to 19 (MSDTTTAFTVPAVAKAVAA) is a signal peptide.

The protein belongs to the ATP-dependent AMP-binding enzyme family.

The protein resides in the secreted. It is found in the cell wall. The enzyme catalyses a medium-chain fatty acid + ATP + CoA = a medium-chain fatty acyl-CoA + AMP + diphosphate. The catalysed reaction is hexanoate + ATP + CoA = hexanoyl-CoA + AMP + diphosphate. It carries out the reaction heptanoate + ATP + CoA = heptanoyl-CoA + AMP + diphosphate. It catalyses the reaction octanoate + ATP + CoA = octanoyl-CoA + AMP + diphosphate. The enzyme catalyses decanoate + ATP + CoA = decanoyl-CoA + AMP + diphosphate. The catalysed reaction is dodecanoate + ATP + CoA = dodecanoyl-CoA + AMP + diphosphate. It carries out the reaction tetradecanoate + ATP + CoA = tetradecanoyl-CoA + AMP + diphosphate. It catalyses the reaction (9Z)-octadecenoate + ATP + CoA = (9Z)-octadecenoyl-CoA + AMP + diphosphate. The enzyme catalyses (9Z,12Z,15Z)-octadecatrienoate + ATP + CoA = (9Z,12Z,15Z)-octadecatrienoyl-CoA + AMP + diphosphate. The catalysed reaction is (5Z,8Z,11Z,14Z)-eicosatetraenoate + ATP + CoA = (5Z,8Z,11Z,14Z)-eicosatetraenoyl-CoA + AMP + diphosphate. It functions in the pathway lipid metabolism; fatty acid metabolism. Its activity is regulated as follows. Inhibited by 2-hydroxydodecanoic acid, a typical inhibitor of medium-chain acyl-CoA synthetases. Functionally, catalyzes the activation of medium-chain fatty acids as acyl-coenzyme A (acyl-CoA). Shows maximal activity with saturated fatty acids of medium-chain length between C6 and C12. Has lower activity with tridecanoic acid (C13), tetradecanoic acid (C14) and with unsaturated fatty acids like oleic acid (C18:1), linolenic acid (C18:3) and arachidonic acid (C20:4). Shows weak activity with some aromatic carbon acids. Involved in the metabolism of fatty acid during mycobacterial survival in macrophages. In Mycobacterium avium, this protein is Medium-chain acyl-CoA ligase Mig.